The following is a 492-amino-acid chain: ATP synthase subunit beta, chloroplastic (492 aa).

ATP is bound at residue 170–177; sequence GGAGVGKT.

The protein belongs to the ATPase alpha/beta chains family. As to quaternary structure, F-type ATPases have 2 components, CF(1) - the catalytic core - and CF(0) - the membrane proton channel. CF(1) has five subunits: alpha(3), beta(3), gamma(1), delta(1), epsilon(1). CF(0) has four main subunits: a(1), b(1), b'(1) and c(9-12).

The protein resides in the plastid. Its subcellular location is the chloroplast thylakoid membrane. It catalyses the reaction ATP + H2O + 4 H(+)(in) = ADP + phosphate + 5 H(+)(out). Functionally, produces ATP from ADP in the presence of a proton gradient across the membrane. The catalytic sites are hosted primarily by the beta subunits. This chain is ATP synthase subunit beta, chloroplastic, found in Angiopteris lygodiifolia (Turnip fern).